A 479-amino-acid polypeptide reads, in one-letter code: Proline--tRNA ligase (479 aa).

It belongs to the class-II aminoacyl-tRNA synthetase family. ProS type 3 subfamily. In terms of assembly, homodimer.

The protein resides in the cytoplasm. The catalysed reaction is tRNA(Pro) + L-proline + ATP = L-prolyl-tRNA(Pro) + AMP + diphosphate. Functionally, catalyzes the attachment of proline to tRNA(Pro) in a two-step reaction: proline is first activated by ATP to form Pro-AMP and then transferred to the acceptor end of tRNA(Pro). This chain is Proline--tRNA ligase, found in Lachnospira eligens (strain ATCC 27750 / DSM 3376 / VPI C15-48 / C15-B4) (Eubacterium eligens).